The following is a 659-amino-acid chain: Exoribonuclease 2 (659 aa).

In terms of domain architecture, RNB spans 189–532; that stretch reads RRDLTALHFV…NHRLIKACLA (344 aa). The region spanning 577–659 is the S1 motif domain; that stretch reads NPEFRAEVQD…ETRSLIGNLV (83 aa).

The protein belongs to the RNR ribonuclease family. RNase II subfamily.

The protein localises to the cytoplasm. It catalyses the reaction Exonucleolytic cleavage in the 3'- to 5'-direction to yield nucleoside 5'-phosphates.. Functionally, involved in mRNA degradation. Hydrolyzes single-stranded polyribonucleotides processively in the 3' to 5' direction. This chain is Exoribonuclease 2, found in Mannheimia succiniciproducens (strain KCTC 0769BP / MBEL55E).